An 865-amino-acid chain; its full sequence is DNA mismatch repair protein MutS (865 aa).

605–612 (GPNMAGKS) serves as a coordination point for ATP. The segment at 814–833 (PEPLEAYKPKGNKQPLSDEE) is disordered.

This sequence belongs to the DNA mismatch repair MutS family.

In terms of biological role, this protein is involved in the repair of mismatches in DNA. It is possible that it carries out the mismatch recognition step. This protein has a weak ATPase activity. This Halalkalibacterium halodurans (strain ATCC BAA-125 / DSM 18197 / FERM 7344 / JCM 9153 / C-125) (Bacillus halodurans) protein is DNA mismatch repair protein MutS.